We begin with the raw amino-acid sequence, 602 residues long: MSGKHREISVAEFFEKNKHILGYSNPAKAIITVVKEAVDNALDACEEAGILPDIFVRISKVDDHFKIVVEDNGPGIPREQIPKVFGKLLYGSRFHEIRQSRGQQGIGISAAVLYAQLTTGKPATVISKTPDEDRAKKVVLYINTKKNEPEIVEEGEEEWYLPSGTKIELEVAGNYVRERKQSVYEYLRETSVINPHAKITFVEPDGTINEFKRVTDDIPQPPKSIKPHPHGIELGTLMSMLKSTRATTLRRFLKEEFVRVGEKIADDVLRKAGFSGDETPQEMGRDDAAKLLNAFRQTDFLPPPTDCLSPIGEAMIAKSLMAEFQPEFVYAVTRKPKVYSGHPFLVEVGLAYGGEIKSEKVTLLRYANKIPLLYQQGGCALTKAVESVNWKSYGMVQNRGELPSAPAVILIHLASTNIPYTSESKESVAAIPEIIDETRLALQEVGRRLKEYLERKSRQQKKKKKEEMIGKVLPLIAKKVCEILEKEPLEIDRIVARIMGYLHVERIVEERDGVKVVTIRVSNFTRSKKSIKLYEMCSGNVEADGAKVSGSGYSTVTWSLEVKPDEEVEVSYRLKGRIINKNPLVEGVEEDLLSGAEVMNFA.

Residues Asn40, Asp71, 92–93 (SR), 102–109 (GQQGIGIS), and Lys425 each bind ATP.

Belongs to the TOP6B family. In terms of assembly, homodimer. Heterotetramer of two Top6A and two Top6B chains.

It carries out the reaction ATP-dependent breakage, passage and rejoining of double-stranded DNA.. In terms of biological role, relaxes both positive and negative superturns and exhibits a strong decatenase activity. This chain is Type 2 DNA topoisomerase 6 subunit B, found in Archaeoglobus fulgidus (strain ATCC 49558 / DSM 4304 / JCM 9628 / NBRC 100126 / VC-16).